Here is a 191-residue protein sequence, read N- to C-terminus: Fe/S biogenesis protein NfuA (191 aa).

Residues Cys-149 and Cys-152 each contribute to the [4Fe-4S] cluster site.

The protein belongs to the NfuA family. Homodimer. The cofactor is [4Fe-4S] cluster.

Functionally, involved in iron-sulfur cluster biogenesis. Binds a 4Fe-4S cluster, can transfer this cluster to apoproteins, and thereby intervenes in the maturation of Fe/S proteins. Could also act as a scaffold/chaperone for damaged Fe/S proteins. This is Fe/S biogenesis protein NfuA from Edwardsiella ictaluri (strain 93-146).